Reading from the N-terminus, the 311-residue chain is MVGLKPSEVPPTTAVKFLGAGTAACFADLLTFPLDTAKVRLQIQGENQATQAARRIQYRGVLGTILTMVRTEGPRSPYNGLVAGLQRQMSFASIRIGLYDSVKQFYTPKGSDHSSITTRILAGCTTGAMAVSCAQPTDVVKVRFQASIHLGAGSNRKYSGTMDAYRTIAREEGVRGLWKGTLPNITRNAIVNCAEMVTYDIIKEKLLDYHLLTDNFPCHLISAFGAGFCATVVASPVDVVKTRYMNSPPGQYCSPLDCMLKMVTQEGPTAFYKGFTPSFLRLGTWNVVMFVTYEQLKRALMKVQMLRESPF.

At 1–10 the chain is on the mitochondrial intermembrane side; that stretch reads MVGLKPSEVP. A helical transmembrane segment spans residues 11-32; it reads PTTAVKFLGAGTAACFADLLTF. Solcar repeat units follow at residues 11–105, 114–205, and 214–299; these read PTTA…VKQF, SSIT…IKEK, and DNFP…LKRA. Residues 33–76 lie on the Mitochondrial matrix side of the membrane; sequence PLDTAKVRLQIQGENQATQAARRIQYRGVLGTILTMVRTEGPRS. A helical membrane pass occupies residues 77-99; it reads PYNGLVAGLQRQMSFASIRIGLY. Residues 100–119 are Mitochondrial intermembrane-facing; it reads DSVKQFYTPKGSDHSSITTR. A helical membrane pass occupies residues 120 to 136; sequence ILAGCTTGAMAVSCAQP. Over 137–182 the chain is Mitochondrial matrix; the sequence is TDVVKVRFQASIHLGAGSNRKYSGTMDAYRTIAREEGVRGLWKGTL. A helical membrane pass occupies residues 183 to 199; it reads PNITRNAIVNCAEMVTY. Residues 200–216 lie on the Mitochondrial intermembrane side of the membrane; that stretch reads DIIKEKLLDYHLLTDNF. A helical membrane pass occupies residues 217–236; that stretch reads PCHLISAFGAGFCATVVASP. Residues 237–270 are Mitochondrial matrix-facing; the sequence is VDVVKTRYMNSPPGQYCSPLDCMLKMVTQEGPTA. A helical transmembrane segment spans residues 271 to 293; it reads FYKGFTPSFLRLGTWNVVMFVTY. The tract at residues 278–300 is purine nucleotide binding; the sequence is SFLRLGTWNVVMFVTYEQLKRAL. Residues 294-311 lie on the Mitochondrial intermembrane side of the membrane; the sequence is EQLKRALMKVQMLRESPF.

This sequence belongs to the mitochondrial carrier (TC 2.A.29) family. As to quaternary structure, interacts with HAX1; the interaction is direct and calcium-dependent.

The protein localises to the mitochondrion inner membrane. Functionally, putative transmembrane transporter that plays a role in mitochondrial metabolism via an as yet unclear mechanism. Originally, this mitochondrial protein was thought to act as a proton transmembrane transporter from the mitochondrial intermembrane space into the matrix, causing proton leaks through the inner mitochondrial membrane, thereby uncoupling mitochondrial membrane potential generation from ATP synthesis. However, this function is controversial and uncoupling may not be the function, or at least not the main function, but rather a consequence of more conventional metabolite transporter activity. The polypeptide is Putative mitochondrial transporter UCP3 (Canis lupus familiaris (Dog)).